The primary structure comprises 404 residues: 26S proteasome regulatory subunit 6A-B (404 aa).

192-199 (GPPGTGKT) contacts ATP.

Belongs to the AAA ATPase family. In terms of assembly, may form a heterodimer with a related family member.

It is found in the cytoplasm. Its subcellular location is the nucleus. In terms of biological role, the 26S proteasome is involved in the ATP-dependent degradation of ubiquitinated proteins. The regulatory (or ATPase) complex confers ATP dependency and substrate specificity to the 26S complex. In Xenopus laevis (African clawed frog), this protein is 26S proteasome regulatory subunit 6A-B (psmc3-b).